Reading from the N-terminus, the 36-residue chain is Photosystem I reaction center subunit VIII (36 aa).

The chain crosses the membrane as a helical span at residues 8-28; sequence SIFVPLVGLVFPAIAMASLFL.

This sequence belongs to the PsaI family.

Its subcellular location is the plastid. It is found in the chloroplast thylakoid membrane. Functionally, may help in the organization of the PsaL subunit. The polypeptide is Photosystem I reaction center subunit VIII (Solanum bulbocastanum (Wild potato)).